The following is a 321-amino-acid chain: Putative zinc finger CCCH domain-containing protein 9 (321 aa).

Disordered stretches follow at residues 1 to 59 and 181 to 269; these read MADA…PGKK and REAE…NLQE. Residues 10–29 are compositionally biased toward basic and acidic residues; that stretch reads EAERRSDETESRSIKEPKEK. The segment at 55-83 adopts a C3H1-type zinc-finger fold; sequence RPGKKDCQFYLKNGLCRYRSSCRFNHPTQ. Positions 164-290 form a coiled coil; it reads TEWRFERERM…EARLRLEQIR (127 aa). 2 stretches are compositionally biased toward basic and acidic residues: residues 181–224 and 231–244; these read REAE…REAQ and RQRDSIERQRREAQ.

The sequence is that of Putative zinc finger CCCH domain-containing protein 9 from Arabidopsis thaliana (Mouse-ear cress).